The chain runs to 152 residues: UPF0178 protein YE1167 (152 aa).

Belongs to the UPF0178 family.

The sequence is that of UPF0178 protein YE1167 from Yersinia enterocolitica serotype O:8 / biotype 1B (strain NCTC 13174 / 8081).